The sequence spans 494 residues: Histidine--tRNA ligase (494 aa).

Positions 1-20 (MAKDQKKQPRPKAETPKGFR) are disordered.

Belongs to the class-II aminoacyl-tRNA synthetase family. Homodimer.

The protein resides in the cytoplasm. It catalyses the reaction tRNA(His) + L-histidine + ATP = L-histidyl-tRNA(His) + AMP + diphosphate + H(+). This Paracoccus denitrificans (strain Pd 1222) protein is Histidine--tRNA ligase.